Consider the following 470-residue polypeptide: Neuraminidase (470 aa).

The Intravirion segment spans residues 1 to 14; sequence MNPNQKIIAIGSAS. Residues 11–32 form an involved in apical transport and lipid raft association region; that stretch reads GSASLGILILNVILHVVSIIVT. Residues 15 to 35 traverse the membrane as a helical segment; it reads LGILILNVILHVVSIIVTVLV. The interval 32–86 is hypervariable stalk region; that stretch reads TVLVLNNNGTGLYCNGTIIREYNETVRVERITQWYNTNTIEYIERPSNEYYMNNT. Over 36–470 the chain is Virion surface; the sequence is LNNNGTGLYC…AILPFDIDKM (435 aa). 4 N-linked (GlcNAc...) asparagine; by host glycosylation sites follow: N39, N46, N54, and N84. Residues 89–470 form a head of neuraminidase region; it reads LCEAQGFAPF…AILPFDIDKM (382 aa). 8 cysteine pairs are disulfide-bonded: C90–C417, C122–C127, C182–C229, C231–C236, C277–C290, C279–C288, C316–C335, and C421–C446. R116 contributes to the substrate binding site. Residue N144 is glycosylated (N-linked (GlcNAc...) asparagine; by host). D149 acts as the Proton donor/acceptor in catalysis. R150 serves as a coordination point for substrate. 275 to 276 provides a ligand contact to substrate; sequence EE. R291 contributes to the substrate binding site. D292 serves as a coordination point for Ca(2+). Residue N293 is glycosylated (N-linked (GlcNAc...) asparagine; by host). 2 residues coordinate Ca(2+): G296 and D322. Substrate is bound at residue R368. N-linked (GlcNAc...) asparagine; by host glycosylation occurs at N398. Y402 (nucleophile) is an active-site residue.

This sequence belongs to the glycosyl hydrolase 34 family. As to quaternary structure, homotetramer. Ca(2+) serves as cofactor. Post-translationally, N-glycosylated.

The protein resides in the virion membrane. It is found in the host apical cell membrane. It catalyses the reaction Hydrolysis of alpha-(2-&gt;3)-, alpha-(2-&gt;6)-, alpha-(2-&gt;8)- glycosidic linkages of terminal sialic acid residues in oligosaccharides, glycoproteins, glycolipids, colominic acid and synthetic substrates.. Its activity is regulated as follows. Inhibited by the neuraminidase inhibitors zanamivir (Relenza) and oseltamivir (Tamiflu). These drugs interfere with the release of progeny virus from infected cells and are effective against all influenza strains. Resistance to neuraminidase inhibitors is quite rare. Its function is as follows. Catalyzes the removal of terminal sialic acid residues from viral and cellular glycoconjugates. Cleaves off the terminal sialic acids on the glycosylated HA during virus budding to facilitate virus release. Additionally helps virus spread through the circulation by further removing sialic acids from the cell surface. These cleavages prevent self-aggregation and ensure the efficient spread of the progeny virus from cell to cell. Otherwise, infection would be limited to one round of replication. Described as a receptor-destroying enzyme because it cleaves a terminal sialic acid from the cellular receptors. May facilitate viral invasion of the upper airways by cleaving the sialic acid moieties on the mucin of the airway epithelial cells. Likely to plays a role in the budding process through its association with lipid rafts during intracellular transport. May additionally display a raft-association independent effect on budding. Plays a role in the determination of host range restriction on replication and virulence. Sialidase activity in late endosome/lysosome traffic seems to enhance virus replication. This Influenza A virus (strain A/Equine/New Market/1979 H3N8) protein is Neuraminidase.